A 428-amino-acid polypeptide reads, in one-letter code: Adenylosuccinate synthetase (428 aa).

GTP contacts are provided by residues 12-18 (GDEGKGK) and 40-42 (GHT). The active-site Proton acceptor is Asp-13. Residues Asp-13 and Gly-40 each coordinate Mg(2+). IMP is bound by residues 13–16 (DEGK), 38–41 (NAGH), Thr-130, Arg-144, Gln-225, Thr-240, and Arg-304. His-41 acts as the Proton donor in catalysis. A substrate-binding site is contributed by 300-306 (VTTGRAR). GTP-binding positions include Arg-306, 332–334 (KID), and 414–416 (SVG).

Belongs to the adenylosuccinate synthetase family. In terms of assembly, homodimer. Mg(2+) serves as cofactor.

It is found in the cytoplasm. It catalyses the reaction IMP + L-aspartate + GTP = N(6)-(1,2-dicarboxyethyl)-AMP + GDP + phosphate + 2 H(+). The protein operates within purine metabolism; AMP biosynthesis via de novo pathway; AMP from IMP: step 1/2. In terms of biological role, plays an important role in the de novo pathway of purine nucleotide biosynthesis. Catalyzes the first committed step in the biosynthesis of AMP from IMP. This is Adenylosuccinate synthetase from Clostridium botulinum (strain ATCC 19397 / Type A).